Here is a 483-residue protein sequence, read N- to C-terminus: Linamarin synthase 1 (483 aa).

Catalysis depends on His-22, which acts as the Proton acceptor. His-22 contacts an anthocyanidin. Asp-124 acts as the Charge relay in catalysis. Residues Thr-146, Val-360, Gln-362, His-377, Trp-380, Asn-381, Ser-382, and Glu-385 each contribute to the UDP-alpha-D-glucose site. An anthocyanidin is bound at residue Ala-400. Residues Glu-401 and Gln-402 each coordinate UDP-alpha-D-glucose.

It belongs to the UDP-glycosyltransferase family. Expressed in the cortex, xylem and phloem parenchyma, and in specific cells in the endodermis of the petiole of the first unfolded leaf.

It catalyses the reaction 2-hydroxy-2-methylpropanenitrile + UDP-alpha-D-glucose = linamarin + UDP + H(+). Its function is as follows. UDP-glucosyltransferase catalyzing in planta synthesis of cyanogenic glucosides. Able to glucosylate acetone cyanohydrin and 2-hydroxy-2-methylbutyronitrile, forming linamarin and lotaustralin. Also accepts, to some extent, a wide range of potential acceptor substrates, including simple alcohols, flavonoids, isoflavonoids and other hydroxynitriles such as p-hydroxymandelonitrile, mandelonitrile, (E)-4-hydroxy-2-methylbut-2-enenitrile and (E)- 2-(hydroxymethyl)but-2-enenitrile. In Manihot esculenta (Cassava), this protein is Linamarin synthase 1.